Reading from the N-terminus, the 484-residue chain is MDAGWKFDNSYARLPERFFSKVLPTPVRAPKLAVLNRSLAVKLGLNEEALRSEDGVAVFGGNQIPGGAEPLAQAYAGHQFGYFTMLGDGRAVLLGEHVTPSGERVDIQLKGSGRTPYSRGGDGRAALGPMLREYIVSEAMHALGIPTTRSLAVVTTGETIMRETELPGAVLTRVASSHLRVGTFQYAAQWGTIEELRALADYALWRHFPGFEEAENRYLFLLEQVIERQAELIAKWQLVGFVHGVMNTDNMTISGETIDYGPCAFMDTYSLETVFSSIDTEGRYAYGNQPYIGGWNLARFAESLLPLLDENEEKAIALAQGALDEYPKRYHHHWLSGMRAKLGLAEEQEGDQELIADLLRLMEAHRADYTNTFRALTLGEYTGMALFDSAEFREWQERWQTRLSQESVSREEAYERMRRHNPAVIPRNHRVEEALAAAVHDGDYSVMERFLEALSDPYAYSPEQEKYAELPPPSDRPYRTFCGT.

ATP contacts are provided by Gly87, Gly89, Arg90, Lys110, Asp122, Gly123, Arg173, and Arg180. Catalysis depends on Asp249, which acts as the Proton acceptor. Mg(2+)-binding residues include Asn250 and Asp259. Residue Asp259 coordinates ATP. The disordered stretch occupies residues Glu463–Thr484.

The protein belongs to the SELO family. Mg(2+) is required as a cofactor. The cofactor is Mn(2+).

It carries out the reaction L-seryl-[protein] + ATP = 3-O-(5'-adenylyl)-L-seryl-[protein] + diphosphate. It catalyses the reaction L-threonyl-[protein] + ATP = 3-O-(5'-adenylyl)-L-threonyl-[protein] + diphosphate. The catalysed reaction is L-tyrosyl-[protein] + ATP = O-(5'-adenylyl)-L-tyrosyl-[protein] + diphosphate. The enzyme catalyses L-histidyl-[protein] + UTP = N(tele)-(5'-uridylyl)-L-histidyl-[protein] + diphosphate. It carries out the reaction L-seryl-[protein] + UTP = O-(5'-uridylyl)-L-seryl-[protein] + diphosphate. It catalyses the reaction L-tyrosyl-[protein] + UTP = O-(5'-uridylyl)-L-tyrosyl-[protein] + diphosphate. Nucleotidyltransferase involved in the post-translational modification of proteins. It can catalyze the addition of adenosine monophosphate (AMP) or uridine monophosphate (UMP) to a protein, resulting in modifications known as AMPylation and UMPylation. This chain is Protein nucleotidyltransferase YdiU, found in Geobacillus kaustophilus (strain HTA426).